Consider the following 201-residue polypeptide: Cell division protein SepF (201 aa).

The span at 27–38 shows a compositional bias: basic and acidic residues; it reads VQERTSVQRDSR. The disordered stretch occupies residues 27–99; it reads VQERTSVQRD…PRVQNKDSVR (73 aa). Positions 43–54 are enriched in polar residues; that stretch reads QEASQRSHMTNS. Positions 72–81 are enriched in basic and acidic residues; that stretch reads NRQERQRVQR. The segment covering 83–92 has biased composition (polar residues); sequence NAYQQATPRV.

Belongs to the SepF family. In terms of assembly, homodimer. Interacts with FtsZ.

It localises to the cytoplasm. Its function is as follows. Cell division protein that is part of the divisome complex and is recruited early to the Z-ring. Probably stimulates Z-ring formation, perhaps through the cross-linking of FtsZ protofilaments. Its function overlaps with FtsA. The protein is Cell division protein SepF of Streptococcus agalactiae serotype Ia (strain ATCC 27591 / A909 / CDC SS700).